The sequence spans 289 residues: Ribosomal protein L11 methyltransferase (289 aa).

4 residues coordinate S-adenosyl-L-methionine: Thr-142, Gly-163, Asp-185, and Asn-226.

This sequence belongs to the methyltransferase superfamily. PrmA family.

It localises to the cytoplasm. It catalyses the reaction L-lysyl-[protein] + 3 S-adenosyl-L-methionine = N(6),N(6),N(6)-trimethyl-L-lysyl-[protein] + 3 S-adenosyl-L-homocysteine + 3 H(+). Methylates ribosomal protein L11. The polypeptide is Ribosomal protein L11 methyltransferase (Legionella pneumophila (strain Lens)).